Consider the following 358-residue polypeptide: tRNA-specific 2-thiouridylase MnmA (358 aa).

ATP-binding positions include 22-29 (LVSGGIDS) and phenylalanine 48. Cysteine 105 acts as the Nucleophile in catalysis. The cysteines at positions 105 and 201 are disulfide-linked. An ATP-binding site is contributed by glycine 129. An interaction with tRNA region spans residues 151-153 (KEQ). Catalysis depends on cysteine 201, which acts as the Cysteine persulfide intermediate. The tract at residues 306–307 (RY) is interaction with tRNA.

Belongs to the MnmA/TRMU family.

It is found in the cytoplasm. The catalysed reaction is S-sulfanyl-L-cysteinyl-[protein] + uridine(34) in tRNA + AH2 + ATP = 2-thiouridine(34) in tRNA + L-cysteinyl-[protein] + A + AMP + diphosphate + H(+). Functionally, catalyzes the 2-thiolation of uridine at the wobble position (U34) of tRNA, leading to the formation of s(2)U34. The sequence is that of tRNA-specific 2-thiouridylase MnmA from Desulfosudis oleivorans (strain DSM 6200 / JCM 39069 / Hxd3) (Desulfococcus oleovorans).